The following is a 306-amino-acid chain: GTPase Era (306 aa).

Positions 13 to 181 (YCGFIAIVGR…EKIVRESLHE (169 aa)) constitute an Era-type G domain. Residues 21–28 (GRPNVGKS) form a G1 region. 21 to 28 (GRPNVGKS) contributes to the GTP binding site. The segment at 47-51 (QTTRH) is G2. The interval 68–71 (DTPG) is G3. Residues 68 to 72 (DTPGL) and 130 to 133 (NKID) each bind GTP. The tract at residues 130–133 (NKID) is G4. The interval 160 to 162 (ISA) is G5. The region spanning 212 to 289 (TGDELPYSVT…HLELWVKVKS (78 aa)) is the KH type-2 domain.

The protein belongs to the TRAFAC class TrmE-Era-EngA-EngB-Septin-like GTPase superfamily. Era GTPase family. As to quaternary structure, monomer.

The protein localises to the cytoplasm. It localises to the cell inner membrane. In terms of biological role, an essential GTPase that binds both GDP and GTP, with rapid nucleotide exchange. Plays a role in 16S rRNA processing and 30S ribosomal subunit biogenesis and possibly also in cell cycle regulation and energy metabolism. This is GTPase Era from Pasteurella multocida (strain Pm70).